Here is a 450-residue protein sequence, read N- to C-terminus: Phosphoglucosamine mutase (450 aa).

The active-site Phosphoserine intermediate is the Ser103. Mg(2+) is bound by residues Ser103, Asp243, Asp245, and Asp247. Ser103 carries the phosphoserine modification.

It belongs to the phosphohexose mutase family. It depends on Mg(2+) as a cofactor. Activated by phosphorylation.

The catalysed reaction is alpha-D-glucosamine 1-phosphate = D-glucosamine 6-phosphate. In terms of biological role, catalyzes the conversion of glucosamine-6-phosphate to glucosamine-1-phosphate. This is Phosphoglucosamine mutase from Lactobacillus delbrueckii subsp. bulgaricus (strain ATCC 11842 / DSM 20081 / BCRC 10696 / JCM 1002 / NBRC 13953 / NCIMB 11778 / NCTC 12712 / WDCM 00102 / Lb 14).